A 1192-amino-acid chain; its full sequence is Probable inactive serine/threonine-protein kinase DDB_G0280131 (1192 aa).

Disordered stretches follow at residues 23 to 90, 144 to 189, 201 to 236, 301 to 406, and 478 to 499; these read STIN…NLNE, DSSI…SQQD, VSISLPPPPTTEELPLPPPSTEELQLPPPPPTTTTA, SIPT…FKDS, and DLDDDITNKNNDNNSNGNNNNK. Residues 26 to 43 are compositionally biased toward low complexity; sequence NLNNNNSNNNNNNNNNGN. A compositionally biased stretch (polar residues) spans 44–60; sequence SATKISFQEQMPNGNGN. Low complexity-rich tracts occupy residues 61-73 and 154-175; these read SSTTTTTAAQQSA and SSYLSKNLSPPSNPSNIISNNN. Residues 201–232 show a composition bias toward pro residues; sequence VSISLPPPPTTEELPLPPPSTEELQLPPPPPT. Low complexity predominate over residues 301-324; the sequence is SIPTPIVTPSTTTSTNTTTAATVN. Polar residues predominate over residues 325 to 338; sequence KLNASKSPNGTLTT. Positions 362 to 376 are enriched in low complexity; that stretch reads PTLSSPSPSQSAAPQ. Pro residues predominate over residues 377–391; it reads PAAPQPTPTSQPQPP. 2 stretches are compositionally biased toward low complexity: residues 392–402 and 485–498; these read TTTVSTPVSPT and NKNNDNNSNGNNNN. The region spanning 521–783 is the Protein kinase domain; sequence AQPSDIIGSG…ILKILRQPLH (263 aa). ATP contacts are provided by residues 527 to 535 and K549; that span reads IGSGNNGTT. Residues 790–831 form a disordered region; sequence KPTQQQQQQQQQDQQQQQPEQQLTSSTSSTSTQDSLVSQEQV. A compositionally biased stretch (low complexity) spans 791 to 828; the sequence is PTQQQQQQQQQDQQQQQPEQQLTSSTSSTSTQDSLVSQ.

The protein belongs to the protein kinase superfamily. TKL Ser/Thr protein kinase family.

This Dictyostelium discoideum (Social amoeba) protein is Probable inactive serine/threonine-protein kinase DDB_G0280131.